The following is a 224-amino-acid chain: MPHKIEGFFLLLLFGYEATLGLSSTEDEGEDPWYQKACKCDCQVGANALWSAGATSLDCIPECPYHKPLGFESGEVTPDQITCSNPEQYVGWYSSWTANKARLNSQGFGCAWLSKYQDSSQWLQIDLKEIKVISGILTQGRCDIDEWVTKYSVQYRTDERLNWIYYKDQTGNNRVFYGNSDRSSTVQNLLRPPIISRFIRLIPLGWHVRIAIRMELLECASKCA.

The N-terminal stretch at 1-23 is a signal peptide; it reads MPHKIEGFFLLLLFGYEATLGLS. An F5/8 type C domain is found at 63–219; sequence CPYHKPLGFE…IAIRMELLEC (157 aa). 2 cysteine pairs are disulfide-bonded: Cys-63–Cys-219 and Cys-110–Cys-142.

Homooctamer of 4 homodimers; disulfide-linked. The homooctamer has a flat, cogwheel structure with a diameter of about 14 nm. Two stacked octamers can assemble to form a hexadecamer. As to expression, detected in the eye cup. Detected in retina, in the inner segment of the photoreceptors, the inner nuclear layer, the inner plexiform layer and the ganglion cell layer (at protein level). Restricted to the retina. At the mRNA level, detected only within the photoreceptor cell layer, most prominently within the inner segments of the photoreceptors. Undetectable in the inner plexiform layers and the inner nuclear layer.

Its subcellular location is the secreted. It localises to the cell membrane. Functionally, binds negatively charged membrane lipids, such as phosphatidylserine and phosphoinositides. May play a role in cell-cell adhesion processes in the retina, via homomeric interaction between octamers present on the surface of two neighboring cells. Required for normal structure and function of the retina. This chain is Retinoschisin (Rs1), found in Mus musculus (Mouse).